A 111-amino-acid chain; its full sequence is Inner membrane protein H108R (111 aa).

Residues 10–32 (LIVIITILITTRELSTTMLIVSL) traverse the membrane as a helical segment. N-linked (GlcNAc...) asparagine; by host glycosylation is present at Asn65.

The protein belongs to the asfivirus H108R family.

The protein resides in the virion membrane. In African swine fever virus (isolate Tick/Malawi/Lil 20-1/1983) (ASFV), this protein is Inner membrane protein H108R.